A 251-amino-acid polypeptide reads, in one-letter code: Triosephosphate isomerase (251 aa).

Position 9-11 (9-11 (NWK)) interacts with substrate. The active-site Electrophile is His94. Glu166 acts as the Proton acceptor in catalysis. Residues Gly172, Ser211, and 232-233 (GG) each bind substrate.

It belongs to the triosephosphate isomerase family. In terms of assembly, homodimer.

Its subcellular location is the cytoplasm. It catalyses the reaction D-glyceraldehyde 3-phosphate = dihydroxyacetone phosphate. It functions in the pathway carbohydrate biosynthesis; gluconeogenesis. Its pathway is carbohydrate degradation; glycolysis; D-glyceraldehyde 3-phosphate from glycerone phosphate: step 1/1. Its function is as follows. Involved in the gluconeogenesis. Catalyzes stereospecifically the conversion of dihydroxyacetone phosphate (DHAP) to D-glyceraldehyde-3-phosphate (G3P). The chain is Triosephosphate isomerase from Xanthomonas oryzae pv. oryzae (strain MAFF 311018).